Here is a 244-residue protein sequence, read N- to C-terminus: Carboxy-S-adenosyl-L-methionine synthase (244 aa).

S-adenosyl-L-methionine is bound by residues Tyr38, 63–65 (GCS), 88–89 (DN), 116–117 (DI), Asn131, and Arg198.

Belongs to the class I-like SAM-binding methyltransferase superfamily. Cx-SAM synthase family. As to quaternary structure, homodimer.

It catalyses the reaction prephenate + S-adenosyl-L-methionine = carboxy-S-adenosyl-L-methionine + 3-phenylpyruvate + H2O. Its function is as follows. Catalyzes the conversion of S-adenosyl-L-methionine (SAM) to carboxy-S-adenosyl-L-methionine (Cx-SAM). This is Carboxy-S-adenosyl-L-methionine synthase from Haemophilus ducreyi (strain 35000HP / ATCC 700724).